The following is a 1066-amino-acid chain: DNA-directed RNA polymerase subunit beta (1066 aa).

It belongs to the RNA polymerase beta chain family. In plastids the minimal PEP RNA polymerase catalytic core is composed of four subunits: alpha, beta, beta', and beta''. When a (nuclear-encoded) sigma factor is associated with the core the holoenzyme is formed, which can initiate transcription.

The protein localises to the plastid. It localises to the chloroplast. The enzyme catalyses RNA(n) + a ribonucleoside 5'-triphosphate = RNA(n+1) + diphosphate. Its function is as follows. DNA-dependent RNA polymerase catalyzes the transcription of DNA into RNA using the four ribonucleoside triphosphates as substrates. This is DNA-directed RNA polymerase subunit beta from Coffea arabica (Arabian coffee).